A 418-amino-acid chain; its full sequence is Protein-lysine N-trimethyltransferase SMYD5 (418 aa).

The SET domain occupies 21–352 (VSVEVRFVSS…PGEEICISYL (332 aa)). The MYND-type zinc-finger motif lies at 98 to 136 (PELCTVRKDLHQNCPHCQVMYCSAECRLAATEQYHQVLC). Tyr351 contacts S-adenosyl-L-methionine. The tract at residues 385–418 (ADEPNVTSEEEEEEEEEEEGEPEDAELGDEMTDV) is disordered.

It belongs to the class V-like SAM-binding methyltransferase superfamily. In terms of assembly, interacts with the N-CoR complex. Interacts with EHMT2 and CBX5. Post-translationally, ubiquitinated and degradaed by the proteasome in response to mild hypothermia (32 degrees Celsius), relieving repression of the SP1 gene.

It is found in the cytoplasm. The enzyme catalyses L-lysyl-[protein] + 3 S-adenosyl-L-methionine = N(6),N(6),N(6)-trimethyl-L-lysyl-[protein] + 3 S-adenosyl-L-homocysteine + 3 H(+). It catalyses the reaction L-lysyl(20)-[histone H4] + 3 S-adenosyl-L-methionine = N(6),N(6),N(6)-trimethyl-L-lysyl(20)-[histone H4] + 3 S-adenosyl-L-homocysteine + 3 H(+). The catalysed reaction is L-lysyl(36)-[histone H3] + 3 S-adenosyl-L-methionine = N(6),N(6),N(6)-trimethyl-L-lysyl(36)-[histone H3] + 3 S-adenosyl-L-homocysteine + 3 H(+). Functionally, protein-lysine N-trimethyltransferase that specifically catalyzes trimethylation of 'Lys-22' of the RPL40/eL40 subunit of the 60S ribosome, thereby promoting translation elongation and protein synthesis. May also act as a histone methyltransferase in the context of histone octamers, but not on nucleosome substrates: trimethylates 'Lys-36' of histone H3 and 'Lys-20' of histone H4 to form H3K36me3 and H4K20me3, respectively. The histone methyltransferase activity, which is independent of its SET domain, is however unsure in vivo. In association with the NCoR corepressor complex, involved in the repression of toll-like receptor 4 (TLR4)-target inflammatory genes in macrophages, possibly by catalyzing the formation of H4K20me3 at the gene promoters. Plays an important role in embryonic stem (ES) cell self-renewal and differentiation. Maintains genome stability of ES cells during differentiation through regulation of heterochromatin formation and repression of endogenous repetitive DNA elements by promoting H4K20me3 marks. Acts as a regulator of the hypothermia response: its degradation in response to mild hypothermia relieves the formation of H3K36me3 at gene promoters, allowing expression of the neuroprotective gene SP1. In Homo sapiens (Human), this protein is Protein-lysine N-trimethyltransferase SMYD5.